We begin with the raw amino-acid sequence, 833 residues long: Protein translocase subunit SecA (833 aa).

ATP is bound by residues Q87, 105–109 (GEGKT), and D494. Residues 789–816 (PAAVAYSGGEAEAGPAQPHREDPKVGRN) form a disordered region. Residues 806-815 (PHREDPKVGR) are compositionally biased toward basic and acidic residues. Residues C819, C821, C830, and C831 each contribute to the Zn(2+) site.

This sequence belongs to the SecA family. As to quaternary structure, monomer and homodimer. Part of the essential Sec protein translocation apparatus which comprises SecA, SecYEG and auxiliary proteins SecDF-YajC and YidC. Requires Zn(2+) as cofactor.

It is found in the cell inner membrane. The protein localises to the cytoplasm. The catalysed reaction is ATP + H2O + cellular proteinSide 1 = ADP + phosphate + cellular proteinSide 2.. In terms of biological role, part of the Sec protein translocase complex. Interacts with the SecYEG preprotein conducting channel. Has a central role in coupling the hydrolysis of ATP to the transfer of proteins into and across the cell membrane, serving as an ATP-driven molecular motor driving the stepwise translocation of polypeptide chains across the membrane. In Nitratidesulfovibrio vulgaris (strain ATCC 29579 / DSM 644 / CCUG 34227 / NCIMB 8303 / VKM B-1760 / Hildenborough) (Desulfovibrio vulgaris), this protein is Protein translocase subunit SecA.